A 510-amino-acid polypeptide reads, in one-letter code: NAD(P)H-quinone oxidoreductase subunit 2 B, chloroplastic (510 aa).

The next 14 helical transmembrane spans lie at F31–T51, W59–W79, I99–I119, M124–C144, L149–Y169, L184–L204, I229–F249, P261–T281, W295–I315, M323–D343, Y354–L374, A395–F415, L418–L438, and M484–I504.

The protein belongs to the complex I subunit 2 family. NDH is composed of at least 16 different subunits, 5 of which are encoded in the nucleus.

It localises to the plastid. The protein resides in the chloroplast thylakoid membrane. It catalyses the reaction a plastoquinone + NADH + (n+1) H(+)(in) = a plastoquinol + NAD(+) + n H(+)(out). The enzyme catalyses a plastoquinone + NADPH + (n+1) H(+)(in) = a plastoquinol + NADP(+) + n H(+)(out). In terms of biological role, NDH shuttles electrons from NAD(P)H:plastoquinone, via FMN and iron-sulfur (Fe-S) centers, to quinones in the photosynthetic chain and possibly in a chloroplast respiratory chain. The immediate electron acceptor for the enzyme in this species is believed to be plastoquinone. Couples the redox reaction to proton translocation, and thus conserves the redox energy in a proton gradient. This chain is NAD(P)H-quinone oxidoreductase subunit 2 B, chloroplastic, found in Hordeum vulgare (Barley).